Here is a 71-residue protein sequence, read N- to C-terminus: Large ribosomal subunit protein bL31 (71 aa).

The Zn(2+) site is built by C16, C18, C36, and C39.

Belongs to the bacterial ribosomal protein bL31 family. Type A subfamily. In terms of assembly, part of the 50S ribosomal subunit. It depends on Zn(2+) as a cofactor.

Binds the 23S rRNA. This is Large ribosomal subunit protein bL31 from Syntrophus aciditrophicus (strain SB).